The primary structure comprises 212 residues: Imidazole glycerol phosphate synthase subunit HisH 2 (212 aa).

The 208-residue stretch at 4–211 (HLGLIDYGMG…LDWLQRGAPI (208 aa)) folds into the Glutamine amidotransferase type-1 domain. Cys-82 acts as the Nucleophile in catalysis. Active-site residues include His-186 and Glu-188.

As to quaternary structure, heterodimer of HisH and HisF.

Its subcellular location is the cytoplasm. It catalyses the reaction 5-[(5-phospho-1-deoxy-D-ribulos-1-ylimino)methylamino]-1-(5-phospho-beta-D-ribosyl)imidazole-4-carboxamide + L-glutamine = D-erythro-1-(imidazol-4-yl)glycerol 3-phosphate + 5-amino-1-(5-phospho-beta-D-ribosyl)imidazole-4-carboxamide + L-glutamate + H(+). The enzyme catalyses L-glutamine + H2O = L-glutamate + NH4(+). The protein operates within amino-acid biosynthesis; L-histidine biosynthesis; L-histidine from 5-phospho-alpha-D-ribose 1-diphosphate: step 5/9. In terms of biological role, IGPS catalyzes the conversion of PRFAR and glutamine to IGP, AICAR and glutamate. The HisH subunit provides the glutamine amidotransferase activity that produces the ammonia necessary to HisF for the synthesis of IGP and AICAR. In Parasynechococcus marenigrum (strain WH8102), this protein is Imidazole glycerol phosphate synthase subunit HisH 2 (hisH2).